The primary structure comprises 424 residues: ATP-citrate synthase alpha chain protein 3 (424 aa).

Citrate is bound by residues N343, T345, and R376.

The protein belongs to the succinate/malate CoA ligase beta subunit family. In terms of assembly, heterooctamer of 4 alpha and 4 beta chains.

Its subcellular location is the cytoplasm. It is found in the cytosol. The enzyme catalyses oxaloacetate + acetyl-CoA + ADP + phosphate = citrate + ATP + CoA. Its function is as follows. ATP citrate-lyase is the primary enzyme responsible for the synthesis of cytosolic acetyl-CoA, used for the elongation of fatty acids and biosynthesis of isoprenoids, flavonoids and malonated derivatives. May supply substrate to the cytosolic acetyl-CoA carboxylase, which generates the malonyl-CoA used for the synthesis of a multitude of compounds, including very long chain fatty acids and flavonoids. Required for normal growth and development and elongation of C18 fatty acids to C20 to C24 fatty acids in seeds. In contrast to all known animal ACL enzymes having a homomeric structure, plant ACLs are composed of alpha and beta chains. The chain is ATP-citrate synthase alpha chain protein 3 (ACLA-3) from Arabidopsis thaliana (Mouse-ear cress).